Reading from the N-terminus, the 312-residue chain is Malate dehydrogenase (312 aa).

Residues 7-13 and aspartate 34 contribute to the NAD(+) site; that span reads GAAGGIG. 2 residues coordinate substrate: arginine 81 and arginine 87. NAD(+) is bound by residues asparagine 94 and 117–119; that span reads ITN. 2 residues coordinate substrate: asparagine 119 and arginine 153. Histidine 177 serves as the catalytic Proton acceptor. Methionine 227 contacts NAD(+).

Belongs to the LDH/MDH superfamily. MDH type 1 family. As to quaternary structure, homodimer.

It catalyses the reaction (S)-malate + NAD(+) = oxaloacetate + NADH + H(+). Functionally, catalyzes the reversible oxidation of malate to oxaloacetate. The protein is Malate dehydrogenase of Shigella dysenteriae serotype 1 (strain Sd197).